The primary structure comprises 603 residues: Granule-bound starch synthase 1, chloroplastic/amyloplastic (603 aa).

The transit peptide at 1–75 directs the protein to the chloroplast; sequence MATITGSSMP…SEKSLGKIVC (75 aa). Residue K91 coordinates ADP-alpha-D-glucose.

Belongs to the glycosyltransferase 1 family. Bacterial/plant glycogen synthase subfamily. In terms of tissue distribution, expressed in pods and leaves. No expression in flowers or stipules.

It is found in the plastid. The protein localises to the chloroplast. The protein resides in the amyloplast. It catalyses the reaction an NDP-alpha-D-glucose + [(1-&gt;4)-alpha-D-glucosyl](n) = [(1-&gt;4)-alpha-D-glucosyl](n+1) + a ribonucleoside 5'-diphosphate + H(+). It participates in glycan biosynthesis; starch biosynthesis. Functionally, may be responsible for the synthesis of amylose. The polypeptide is Granule-bound starch synthase 1, chloroplastic/amyloplastic (Pisum sativum (Garden pea)).